Consider the following 487-residue polypeptide: Chromosomal replication initiator protein DnaA (487 aa).

Residues Met-1–Gly-79 are domain I, interacts with DnaA modulators. Residues Val-78–Arg-138 are disordered. The tract at residues Gly-79–Ser-150 is domain II. The tract at residues Phe-151–Ala-367 is domain III, AAA+ region. Positions 195, 197, 198, and 199 each coordinate ATP. The interval His-368–Thr-487 is domain IV, binds dsDNA.

The protein belongs to the DnaA family. As to quaternary structure, oligomerizes as a right-handed, spiral filament on DNA at oriC.

The protein localises to the cytoplasm. In terms of biological role, plays an essential role in the initiation and regulation of chromosomal replication. ATP-DnaA binds to the origin of replication (oriC) to initiate formation of the DNA replication initiation complex once per cell cycle. Binds the DnaA box (a 9 base pair repeat at the origin) and separates the double-stranded (ds)DNA. Forms a right-handed helical filament on oriC DNA; dsDNA binds to the exterior of the filament while single-stranded (ss)DNA is stabiized in the filament's interior. The ATP-DnaA-oriC complex binds and stabilizes one strand of the AT-rich DNA unwinding element (DUE), permitting loading of DNA polymerase. After initiation quickly degrades to an ADP-DnaA complex that is not apt for DNA replication. Binds acidic phospholipids. This Marinobacter nauticus (strain ATCC 700491 / DSM 11845 / VT8) (Marinobacter aquaeolei) protein is Chromosomal replication initiator protein DnaA.